The sequence spans 417 residues: CinA-like protein (417 aa).

The protein belongs to the CinA family.

The polypeptide is CinA-like protein (Synechococcus sp. (strain RCC307)).